The chain runs to 512 residues: 2-isopropylmalate synthase (512 aa).

One can recognise a Pyruvate carboxyltransferase domain in the interval 5–267 (LYIFDTTLRD…DSRVDATQIV (263 aa)). Residues Asp14, His202, His204, and Asn238 each contribute to the Mn(2+) site. The tract at residues 393–512 (KLVSLKVVSE…EEKMNAQAAA (120 aa)) is regulatory domain.

Belongs to the alpha-IPM synthase/homocitrate synthase family. LeuA type 1 subfamily. Homodimer. Requires Mn(2+) as cofactor.

It is found in the cytoplasm. The catalysed reaction is 3-methyl-2-oxobutanoate + acetyl-CoA + H2O = (2S)-2-isopropylmalate + CoA + H(+). Its pathway is amino-acid biosynthesis; L-leucine biosynthesis; L-leucine from 3-methyl-2-oxobutanoate: step 1/4. Functionally, catalyzes the condensation of the acetyl group of acetyl-CoA with 3-methyl-2-oxobutanoate (2-ketoisovalerate) to form 3-carboxy-3-hydroxy-4-methylpentanoate (2-isopropylmalate). This is 2-isopropylmalate synthase from Chromobacterium violaceum (strain ATCC 12472 / DSM 30191 / JCM 1249 / CCUG 213 / NBRC 12614 / NCIMB 9131 / NCTC 9757 / MK).